A 153-amino-acid polypeptide reads, in one-letter code: Cell division protein SepF (153 aa).

Belongs to the SepF family. As to quaternary structure, homodimer. Interacts with FtsZ.

The protein resides in the cytoplasm. Its function is as follows. Cell division protein that is part of the divisome complex and is recruited early to the Z-ring. Probably stimulates Z-ring formation, perhaps through the cross-linking of FtsZ protofilaments. Its function overlaps with FtsA. The polypeptide is Cell division protein SepF (Clostridium tetani (strain Massachusetts / E88)).